Consider the following 436-residue polypeptide: uncharacterized protein (436 aa).

The signal sequence occupies residues 1–19 (MKKLLLASIIGLASTTSFA).

This is an uncharacterized protein from Rickettsia bellii (strain RML369-C).